Reading from the N-terminus, the 331-residue chain is Bifunctional nuclease 1 (331 aa).

Residues 126–261 enclose the BFN domain; sequence CVQNNPRVLR…RIAYNNGLKV (136 aa). The 36-residue stretch at 291 to 326 folds into the UVR domain; it reads EAQEFDLVRNMLVAAVEERYKDAAQYRDQLFMFRAK.

This sequence belongs to the bifunctional nuclease family.

The protein localises to the nucleus. In terms of biological role, bifunctional nuclease with both RNase and DNase activities. Involved in basal defense response. Participates in abscisic acid-derived callose deposition following infection by a necrotrophic pathogen. This chain is Bifunctional nuclease 1 (BBD1), found in Oryza sativa subsp. japonica (Rice).